A 498-amino-acid polypeptide reads, in one-letter code: Guanosine-5'-triphosphate,3'-diphosphate pyrophosphatase (498 aa).

This sequence belongs to the GppA/Ppx family. GppA subfamily.

The catalysed reaction is guanosine 3'-diphosphate 5'-triphosphate + H2O = guanosine 3',5'-bis(diphosphate) + phosphate + H(+). The protein operates within purine metabolism; ppGpp biosynthesis; ppGpp from GTP: step 2/2. In terms of biological role, catalyzes the conversion of pppGpp to ppGpp. Guanosine pentaphosphate (pppGpp) is a cytoplasmic signaling molecule which together with ppGpp controls the 'stringent response', an adaptive process that allows bacteria to respond to amino acid starvation, resulting in the coordinated regulation of numerous cellular activities. The chain is Guanosine-5'-triphosphate,3'-diphosphate pyrophosphatase from Yersinia pseudotuberculosis serotype O:1b (strain IP 31758).